The primary structure comprises 565 residues: Sulfite reductase [NADPH] hemoprotein beta-component (565 aa).

[4Fe-4S] cluster is bound by residues Cys-429, Cys-435, Cys-474, and Cys-478. A siroheme-binding site is contributed by Cys-478.

Belongs to the nitrite and sulfite reductase 4Fe-4S domain family. In terms of assembly, alpha(8)-beta(8). The alpha component is a flavoprotein, the beta component is a hemoprotein. Requires siroheme as cofactor. It depends on [4Fe-4S] cluster as a cofactor.

The enzyme catalyses hydrogen sulfide + 3 NADP(+) + 3 H2O = sulfite + 3 NADPH + 4 H(+). Its pathway is sulfur metabolism; hydrogen sulfide biosynthesis; hydrogen sulfide from sulfite (NADPH route): step 1/1. Component of the sulfite reductase complex that catalyzes the 6-electron reduction of sulfite to sulfide. This is one of several activities required for the biosynthesis of L-cysteine from sulfate. This chain is Sulfite reductase [NADPH] hemoprotein beta-component, found in Shewanella sp. (strain W3-18-1).